The sequence spans 201 residues: LexA repressor 1 (201 aa).

Residues 27 to 47 (LAEIAQAFGFASRNAAQKHVQ) constitute a DNA-binding region (H-T-H motif). Catalysis depends on for autocatalytic cleavage activity residues Ser-122 and Lys-159.

This sequence belongs to the peptidase S24 family. As to quaternary structure, homodimer.

The enzyme catalyses Hydrolysis of Ala-|-Gly bond in repressor LexA.. Represses a number of genes involved in the response to DNA damage (SOS response), including recA and lexA. In the presence of single-stranded DNA, RecA interacts with LexA causing an autocatalytic cleavage which disrupts the DNA-binding part of LexA, leading to derepression of the SOS regulon and eventually DNA repair. The chain is LexA repressor 1 from Xanthomonas axonopodis pv. citri (strain 306).